The chain runs to 510 residues: Inositol-3-phosphate synthase isozyme 2 (510 aa).

Belongs to the myo-inositol 1-phosphate synthase family. NAD(+) is required as a cofactor. Expressed in siliques, leaves, roots, seed endosperm, but not in embryos. Highest expression in seeds. In leaves, only expressed in hydathodes and vascular tissue.

It localises to the cytoplasm. It catalyses the reaction D-glucose 6-phosphate = 1D-myo-inositol 3-phosphate. It participates in polyol metabolism; myo-inositol biosynthesis; myo-inositol from D-glucose 6-phosphate: step 1/2. Key enzyme in myo-inositol biosynthesis pathway that catalyzes the conversion of glucose 6-phosphate to 1-myo-inositol 1-phosphate in a NAD-dependent manner. This chain is Inositol-3-phosphate synthase isozyme 2 (IPS2), found in Arabidopsis thaliana (Mouse-ear cress).